We begin with the raw amino-acid sequence, 140 residues long: MRRVVAQGTFDLLHPGHLYYLTEAKSMGDELHVIVARSQNVTHKQPPIVPDEQRREMVAGLDPVDSARLGHTDDFFVPIRDIDPDVIVLGHDQHHDDERLAEMLTEEGIDCEVARASARDGDDKILSTGRIVDRICEERC.

Residues 9-10, 14-17, and Asp-92 contribute to the ATP site; these read TF and HPGH.

Belongs to the archaeal FAD synthase family. In terms of assembly, homodimer. A divalent metal cation is required as a cofactor.

The catalysed reaction is FMN + ATP + H(+) = FAD + diphosphate. The protein operates within cofactor biosynthesis; FAD biosynthesis; FAD from FMN: step 1/1. Its function is as follows. Catalyzes the transfer of the AMP portion of ATP to flavin mononucleotide (FMN) to produce flavin adenine dinucleotide (FAD) coenzyme. In Natronomonas pharaonis (strain ATCC 35678 / DSM 2160 / CIP 103997 / JCM 8858 / NBRC 14720 / NCIMB 2260 / Gabara) (Halobacterium pharaonis), this protein is FAD synthase.